We begin with the raw amino-acid sequence, 241 residues long: Uridylate kinase (241 aa).

Lys-15–Gly-18 contributes to the ATP binding site. The segment at Gly-23–Gly-28 is involved in allosteric activation by GTP. Gly-57 serves as a coordination point for UMP. The ATP site is built by Gly-58 and Arg-62. UMP is bound by residues Asp-77 and Thr-138 to Thr-145. ATP-binding residues include Thr-165, Tyr-171, and Asp-174.

The protein belongs to the UMP kinase family. Homohexamer.

Its subcellular location is the cytoplasm. The catalysed reaction is UMP + ATP = UDP + ADP. It functions in the pathway pyrimidine metabolism; CTP biosynthesis via de novo pathway; UDP from UMP (UMPK route): step 1/1. Allosterically activated by GTP. Inhibited by UTP. Catalyzes the reversible phosphorylation of UMP to UDP. The polypeptide is Uridylate kinase (Serratia proteamaculans (strain 568)).